A 141-amino-acid polypeptide reads, in one-letter code: Putative pre-16S rRNA nuclease (141 aa).

Belongs to the YqgF nuclease family.

It is found in the cytoplasm. Could be a nuclease involved in processing of the 5'-end of pre-16S rRNA. The chain is Putative pre-16S rRNA nuclease from Aliivibrio fischeri (strain ATCC 700601 / ES114) (Vibrio fischeri).